We begin with the raw amino-acid sequence, 1095 residues long: DNA-directed RNA polymerase subunit beta (1095 aa).

Residues 1069–1095 form a disordered region; it reads DLMQDVNPRRSTPSRPTYESLGKEYEE.

Belongs to the RNA polymerase beta chain family. In cyanobacteria the RNAP catalytic core is composed of 2 alpha, 1 beta, 1 beta', 1 gamma and 1 omega subunit. When a sigma factor is associated with the core the holoenzyme is formed, which can initiate transcription.

It catalyses the reaction RNA(n) + a ribonucleoside 5'-triphosphate = RNA(n+1) + diphosphate. Functionally, DNA-dependent RNA polymerase catalyzes the transcription of DNA into RNA using the four ribonucleoside triphosphates as substrates. This Prochlorococcus marinus (strain NATL2A) protein is DNA-directed RNA polymerase subunit beta.